A 535-amino-acid chain; its full sequence is Glucose-6-phosphate isomerase (535 aa).

Glutamate 359 functions as the Proton donor in the catalytic mechanism. Residues histidine 390 and lysine 505 contribute to the active site.

This sequence belongs to the GPI family.

It is found in the cytoplasm. It carries out the reaction alpha-D-glucose 6-phosphate = beta-D-fructose 6-phosphate. It participates in carbohydrate biosynthesis; gluconeogenesis. The protein operates within carbohydrate degradation; glycolysis; D-glyceraldehyde 3-phosphate and glycerone phosphate from D-glucose: step 2/4. Its function is as follows. Catalyzes the reversible isomerization of glucose-6-phosphate to fructose-6-phosphate. This is Glucose-6-phosphate isomerase from Treponema pallidum (strain Nichols).